The chain runs to 483 residues: Regulatory protein ViaA (483 aa).

This sequence belongs to the ViaA family. As to quaternary structure, homodimer. Interacts with RavA.

Its subcellular location is the cytoplasm. Functionally, component of the RavA-ViaA chaperone complex, which may act on the membrane to optimize the function of some of the respiratory chains. ViaA stimulates the ATPase activity of RavA. In Escherichia coli O17:K52:H18 (strain UMN026 / ExPEC), this protein is Regulatory protein ViaA.